The following is a 450-amino-acid chain: Protein tweety homolog 1 (450 aa).

Residues M1–A43 lie on the Extracellular side of the membrane. The chain crosses the membrane as a helical span at residues L44 to V64. The Cytoplasmic portion of the chain corresponds to Y65 to G88. A helical transmembrane segment spans residues C89 to F109. Topologically, residues Y110–W214 are extracellular. 2 N-linked (GlcNAc...) asparagine glycosylation sites follow: N130 and N205. A helical transmembrane segment spans residues L215–L235. The Cytoplasmic segment spans residues A236–K240. The helical transmembrane segment at W241 to M261 threads the bilayer. Residues G262 to E390 lie on the Extracellular side of the membrane. 2 disulfide bridges follow: C275–C385 and C303–C370. 2 N-linked (GlcNAc...) asparagine glycosylation sites follow: N284 and N355. Residues G391 to C411 traverse the membrane as a helical segment. The Cytoplasmic portion of the chain corresponds to S412–I450. A disordered region spans residues D428–I450. Phosphoserine is present on S440.

The protein belongs to the tweety family. As to quaternary structure, homotetramer; disulfide-linked. Homodimer. N-glycosylated. Contains high-mannose, hybrid and complex oligosaccharides. In terms of tissue distribution, expressed in brain, eye, ovary and testis, and at lower levels in muscle, placenta, liver and lung.

The protein localises to the cell membrane. The enzyme catalyses chloride(in) = chloride(out). The catalysed reaction is L-glutamate(out) = L-glutamate(in). In terms of biological role, calcium-independent, swelling-dependent volume-regulated anion channel (VRAC-swell) which plays a pivotal role in the process of regulatory volume decrease (RVD) in the brain through the efflux of anions like chloride and organic osmolytes like glutamate. Functionally, ca(2+)-independent, swelling-activated chloride channel, possibly involved in regulation of cell volume. This is Protein tweety homolog 1 (TTYH1) from Homo sapiens (Human).